The chain runs to 122 residues: Small ribosomal subunit protein uS13 (122 aa).

A disordered region spans residues 97 to 122; sequence PVRGQRTHTNARTRKGPAKAIAGKKK.

This sequence belongs to the universal ribosomal protein uS13 family. In terms of assembly, part of the 30S ribosomal subunit. Forms a loose heterodimer with protein S19. Forms two bridges to the 50S subunit in the 70S ribosome.

Located at the top of the head of the 30S subunit, it contacts several helices of the 16S rRNA. In the 70S ribosome it contacts the 23S rRNA (bridge B1a) and protein L5 of the 50S subunit (bridge B1b), connecting the 2 subunits; these bridges are implicated in subunit movement. Contacts the tRNAs in the A and P-sites. In Brucella anthropi (strain ATCC 49188 / DSM 6882 / CCUG 24695 / JCM 21032 / LMG 3331 / NBRC 15819 / NCTC 12168 / Alc 37) (Ochrobactrum anthropi), this protein is Small ribosomal subunit protein uS13.